A 193-amino-acid polypeptide reads, in one-letter code: Riboflavin kinase (193 aa).

Residues 1-59 (MGISQQAASQHLRELEDEGLITRNAEGKGISVMVTDKGRHELLRVYNILHDSLHSRPDH) form an H-T-H motif-like region. The segment at 60–193 (VEITGTLVSG…TIRIPLEQED (134 aa)) is riboflavin kinase. 69–74 (GMNEGA) serves as a coordination point for CDP. Thr98 and Asn100 together coordinate Mg(2+). Positions 156 and 164 each coordinate FMN. 169–172 (LDIR) lines the CDP pocket.

This sequence belongs to the archaeal riboflavin kinase family. Requires Mg(2+) as cofactor.

The catalysed reaction is riboflavin + CTP = CDP + FMN + H(+). The protein operates within cofactor biosynthesis; FMN biosynthesis; FMN from riboflavin (CTP route): step 1/1. In terms of biological role, catalyzes the CTP-dependent phosphorylation of riboflavin (vitamin B2) to form flavin mononucleotide (FMN). This Cenarchaeum symbiosum (strain A) protein is Riboflavin kinase (ribK).